We begin with the raw amino-acid sequence, 428 residues long: 3-phosphoshikimate 1-carboxyvinyltransferase (428 aa).

3-phosphoshikimate is bound by residues Lys23, Ser24, and Arg28. Lys23 serves as a coordination point for phosphoenolpyruvate. 2 residues coordinate phosphoenolpyruvate: Gly97 and Arg125. Residues Ser170, Ser171, Gln172, Ser198, Asp314, Asn337, and Lys341 each contribute to the 3-phosphoshikimate site. Gln172 contacts phosphoenolpyruvate. The Proton acceptor role is filled by Asp314. Residues Arg345, Arg387, and Lys412 each contribute to the phosphoenolpyruvate site.

The protein belongs to the EPSP synthase family. Monomer.

The protein localises to the cytoplasm. The catalysed reaction is 3-phosphoshikimate + phosphoenolpyruvate = 5-O-(1-carboxyvinyl)-3-phosphoshikimate + phosphate. Its pathway is metabolic intermediate biosynthesis; chorismate biosynthesis; chorismate from D-erythrose 4-phosphate and phosphoenolpyruvate: step 6/7. Functionally, catalyzes the transfer of the enolpyruvyl moiety of phosphoenolpyruvate (PEP) to the 5-hydroxyl of shikimate-3-phosphate (S3P) to produce enolpyruvyl shikimate-3-phosphate and inorganic phosphate. In Yersinia pestis bv. Antiqua (strain Antiqua), this protein is 3-phosphoshikimate 1-carboxyvinyltransferase.